The primary structure comprises 309 residues: Formate-nitrite transporter (309 aa).

Residues 1-19 lie on the Cytoplasmic side of the membrane; sequence MPPNNSKYVLDPVSIKSVC. An intramembrane region (helical) is located at residues 20 to 35; that stretch reads GGEESYIRCVEYGKKK. Residues 36–40 lie on the Cytoplasmic side of the membrane; the sequence is AHYSN. The helical transmembrane segment at 41–68 threads the bilayer; the sequence is LNLLAKAILAGMFVGLCAHASGIAGGLF. Over 69 to 79 the chain is Extracellular; it reads YYHKLREIVGA. Residues 80-100 traverse the membrane as a helical segment; sequence SMSVFVYGFTFPIAFMCIICT. Topologically, residues 101 to 122 are cytoplasmic; it reads GSDLFTGNTLAVTMALYEKKVK. The chain crosses the membrane as a helical span at residues 123-150; that stretch reads LLDYLRVMTISLFGNYVGAVSFAFFVSY. Residues 151 to 163 lie on the Extracellular side of the membrane; it reads LSGAFTNVHAVEK. The segment at residues 164–179 is an intramembrane region (helical); that stretch reads NHFFQFLNDIAEKKVH. Over 180 to 181 the chain is Extracellular; sequence HT. A helical transmembrane segment spans residues 182-206; sequence FVECVSLAVGCNIFVCLAVYFVLTL. Residues 207–209 are Cytoplasmic-facing; sequence KDG. Residues 210–226 traverse the membrane as a helical segment; that stretch reads AGYVFSVFFAVYAFAIA. The Extracellular segment spans residues 227–249; that stretch reads GYEHIIANIYTLNIALMVNTKIT. A helical membrane pass occupies residues 250–280; sequence VYQAYIKNLLPTLLGNYIAGAIVLGLPLYFI. Residues 281–309 are Cytoplasmic-facing; it reads YKEHYYNFERSKRDNNDAQMKSLSIELRN.

This sequence belongs to the FNT transporter (TC 1.A.16) family. In terms of assembly, homopentamer.

The protein resides in the cell membrane. Its subcellular location is the vacuole membrane. The enzyme catalyses (S)-lactate(in) + H(+)(in) = (S)-lactate(out) + H(+)(out). It carries out the reaction formate(in) + H(+)(in) = formate(out) + H(+)(out). The catalysed reaction is pyruvate(out) + H(+)(out) = pyruvate(in) + H(+)(in). It catalyses the reaction acetate(out) + H(+)(out) = acetate(in) + H(+)(in). With respect to regulation, inhibited by diethylpyrocarbonate (DEPC). Protonophores, such as 2,4-dinitrophenol and carbonylcyanide-3-chlorophenylhydrazone, abolish transport. Inhibited by phloretin, furosemide, alpha-cyano-4-hydroxy-cinnamate and alpha-fluorocinnamate. Inhibited by the Malaria Box compound MMV007839 and its derivatives BH296 and BH267.meta. Inhibited by the Malaria Box compound MMV000972. Inhibited by broad-specificity anion transport inhibitor NPPB. Its function is as follows. Monocarboxylate-proton symporter that mediates the efflux of the waste product lactate in the intraerythrocytic parasites; active in acidic-to-neutral pH range. Transports L-lactate. Transports D-lactate, pyruvate, acetate and formate. Essential for asexual growth but dispensable for the development of gametocytes. This Plasmodium falciparum (isolate 3D7) protein is Formate-nitrite transporter.